Here is a 733-residue protein sequence, read N- to C-terminus: DNA replication licensing factor Mcm5 (733 aa).

The MCM domain occupies 328 to 534 (IYERLSQSLA…RDITLAKHII (207 aa)). ADP is bound at residue arginine 368. An Arginine finger motif is present at residues 509-512 (SRFD).

The protein belongs to the MCM family. Component of the Mcm2-7 complex. The complex forms a toroidal hexameric ring with the proposed subunit order Mcm2-Mcm6-Mcm4-Mcm7-Mcm3-Mcm5.

The protein localises to the nucleus. The protein resides in the cytoplasm. It localises to the cytosol. The catalysed reaction is ATP + H2O = ADP + phosphate + H(+). In terms of biological role, acts as a component of the Mcm2-7 complex (Mcm complex) which is the putative replicative helicase essential for 'once per cell cycle' DNA replication initiation and elongation in eukaryotic cells. Core component of CDC45-MCM-GINS (CMG) helicase, the molecular machine that unwinds template DNA during replication, and around which the replisome is built. The active ATPase sites in the Mcm2-7 ring are formed through the interaction surfaces of two neighboring subunits such that a critical structure of a conserved arginine finger motif is provided in trans relative to the ATP-binding site of the Walker A box of the adjacent subunit. The six ATPase active sites, however, are likely to contribute differentially to the complex helicase activity. The protein is DNA replication licensing factor Mcm5 (Mcm5) of Drosophila melanogaster (Fruit fly).